A 217-amino-acid chain; its full sequence is Zinc finger CCHC-type and RNA-binding motif-containing protein 1 (217 aa).

The 79-residue stretch at 10 to 88 (STVYVSNLPF…RVIKASIAID (79 aa)) folds into the RRM domain. The CCHC-type zinc-finger motif lies at 105–122 (SKCYECGESGHLSYACPK). Positions 120–217 (CPKNMLGERE…YFSDEEELSD (98 aa)) are disordered. Positions 145-163 (PEEEIEEVEESEDEGEDPA) are enriched in acidic residues. Residues S155, S210, and S216 each carry the phosphoserine modification.

In terms of assembly, component of the U11/U12 snRNPs that are part of the U12-type spliceosome.

Its subcellular location is the nucleus. It localises to the nucleoplasm. The chain is Zinc finger CCHC-type and RNA-binding motif-containing protein 1 (ZCRB1) from Homo sapiens (Human).